The sequence spans 744 residues: 1,4-alpha-glucan branching enzyme GlgB (744 aa).

D415 (nucleophile) is an active-site residue. The Proton donor role is filled by E468.

This sequence belongs to the glycosyl hydrolase 13 family. GlgB subfamily. As to quaternary structure, monomer.

It carries out the reaction Transfers a segment of a (1-&gt;4)-alpha-D-glucan chain to a primary hydroxy group in a similar glucan chain.. It functions in the pathway glycan biosynthesis; glycogen biosynthesis. Its function is as follows. Catalyzes the formation of the alpha-1,6-glucosidic linkages in glycogen by scission of a 1,4-alpha-linked oligosaccharide from growing alpha-1,4-glucan chains and the subsequent attachment of the oligosaccharide to the alpha-1,6 position. The sequence is that of 1,4-alpha-glucan branching enzyme GlgB from Shewanella frigidimarina (strain NCIMB 400).